Consider the following 333-residue polypeptide: tRNA N6-adenosine threonylcarbamoyltransferase (333 aa).

The Fe cation site is built by His111 and His115. Substrate contacts are provided by residues 134 to 138, Asp167, Gly180, and Asn272; that span reads LVSGG. Position 300 (Asp300) interacts with Fe cation.

This sequence belongs to the KAE1 / TsaD family. The cofactor is Fe(2+).

The protein localises to the cytoplasm. It catalyses the reaction L-threonylcarbamoyladenylate + adenosine(37) in tRNA = N(6)-L-threonylcarbamoyladenosine(37) in tRNA + AMP + H(+). Its function is as follows. Required for the formation of a threonylcarbamoyl group on adenosine at position 37 (t(6)A37) in tRNAs that read codons beginning with adenine. Is involved in the transfer of the threonylcarbamoyl moiety of threonylcarbamoyl-AMP (TC-AMP) to the N6 group of A37, together with TsaE and TsaB. TsaD likely plays a direct catalytic role in this reaction. This is tRNA N6-adenosine threonylcarbamoyltransferase from Legionella pneumophila subsp. pneumophila (strain Philadelphia 1 / ATCC 33152 / DSM 7513).